The following is a 148-amino-acid chain: Snaclec 27 (148 aa).

An N-terminal signal peptide occupies residues 1-23 (WGDSSSSASACWSCFSLVSGIGA). 3 disulfides stabilise this stretch: Cys-27–Cys-38, Cys-55–Cys-144, and Cys-121–Cys-136. The C-type lectin domain maps to 34-145 (HEGHCYKVFS…CSSTQQFVCK (112 aa)).

This sequence belongs to the snaclec family. Heterodimer; disulfide-linked. In terms of tissue distribution, expressed by the venom gland.

The protein localises to the secreted. Functionally, interferes with one step of hemostasis (modulation of platelet aggregation, or coagulation cascade, for example). This is Snaclec 27 from Echis ocellatus (Ocellated saw-scaled viper).